The following is a 424-amino-acid chain: Testican-2 (424 aa).

An N-terminal signal peptide occupies residues 1–22 (MRAPGCGRLVLPLLLLAAAALA). Phosphoserine; by FAM20C is present on Ser72. 5 disulfide bridges follow: Cys90–Cys101, Cys95–Cys111, Cys136–Cys166, Cys139–Cys159, and Cys148–Cys180. The 53-residue stretch at 130–182 (GNKDSICKPCHMAQLASVCGSDGHTYSSVCKLEQQACLSSKQLAVRCEGPCPC) folds into the Kazal-like domain. Asn225 carries an N-linked (GlcNAc...) asparagine glycan. One can recognise a Thyroglobulin type-1 domain in the interval 310–376 (KPPCLAELER…GTRTHGSPDC (67 aa)). Disulfide bonds link Cys313–Cys337, Cys348–Cys355, and Cys357–Cys376. Ser383 and Ser388 each carry an O-linked (Xyl...) (glycosaminoglycan) serine glycan. The interval 387-424 (GSGVGWEDEEEKETEEAGEEAEEEEGEAGEADDGGYIW) is disordered. Positions 392–424 (WEDEEEKETEEAGEEAEEEEGEAGEADDGGYIW) are enriched in acidic residues.

In terms of processing, contains chondroitin sulfate and heparan sulfate O-linked oligosaccharides. Highly expressed in brain. Also found in lung and testis.

It localises to the secreted. The protein resides in the extracellular space. The protein localises to the extracellular matrix. In terms of biological role, may participate in diverse steps of neurogenesis. Binds calcium. This is Testican-2 (SPOCK2) from Homo sapiens (Human).